The primary structure comprises 348 residues: MSKQTLVLLYGGRSAEREVSVLSAESVMRAVNYDKFLVKTYFITQMGQFIRTQQFSEKPSESERLMTNETIELTQKIKPSDIYEEGAVVFPVLHGPMGEDGSIQGFLEVLRMPYIGTNVMSSSIAMDKITTKRVLESIGIPQVAYTVYIDGQDLEACLVETLARLTFPIFVKPANMGSSVGISKAQTKVELRKAIQLALTYDSRVLIEQGVVAREIEVGLLGNDKVKSTLPGEVIKDVDFYDYQAKYVDNKITMAIPADVDQSIVTEMRSYAEVAFKALGGCGLSRCDFFLTQDGQVYLNELNTMPGFTQWSMYPLLWENMGLAYPDLIEELVTLAQEIFDQRESHLI.

One can recognise an ATP-grasp domain in the interval 132–334 (KRVLESIGIP…YPDLIEELVT (203 aa)). Position 162-217 (162-217 (LARLTFPIFVKPANMGSSVGISKAQTKVELRKAIQLALTYDSRVLIEQGVVAREIE)) interacts with ATP. Positions 288, 301, and 303 each coordinate Mg(2+).

It belongs to the D-alanine--D-alanine ligase family. Mg(2+) is required as a cofactor. It depends on Mn(2+) as a cofactor.

It localises to the cytoplasm. The catalysed reaction is 2 D-alanine + ATP = D-alanyl-D-alanine + ADP + phosphate + H(+). Its pathway is cell wall biogenesis; peptidoglycan biosynthesis. Cell wall formation. The sequence is that of D-alanine--D-alanine ligase from Streptococcus pyogenes serotype M6 (strain ATCC BAA-946 / MGAS10394).